The following is a 355-amino-acid chain: 3-dehydroquinate synthase (355 aa).

Residues 105–109 (GVVGD), 129–130 (TS), K142, K151, and 169–172 (TLKT) each bind NAD(+). E184, H246, and H263 together coordinate Zn(2+).

It belongs to the sugar phosphate cyclases superfamily. Dehydroquinate synthase family. Requires NAD(+) as cofactor. It depends on Co(2+) as a cofactor. The cofactor is Zn(2+).

It is found in the cytoplasm. It carries out the reaction 7-phospho-2-dehydro-3-deoxy-D-arabino-heptonate = 3-dehydroquinate + phosphate. The protein operates within metabolic intermediate biosynthesis; chorismate biosynthesis; chorismate from D-erythrose 4-phosphate and phosphoenolpyruvate: step 2/7. In terms of biological role, catalyzes the conversion of 3-deoxy-D-arabino-heptulosonate 7-phosphate (DAHP) to dehydroquinate (DHQ). This is 3-dehydroquinate synthase from Streptococcus agalactiae serotype III (strain NEM316).